Reading from the N-terminus, the 397-residue chain is uncharacterized protein (397 aa).

This is an uncharacterized protein from Nostoc sp. (strain PCC 7120 / SAG 25.82 / UTEX 2576).